The primary structure comprises 220 residues: uncharacterized protein (220 aa).

The segment at 1-50 (MTDDVRDVNTETTDATEVAEIDSAAGEAGDSATEAFDTDSATESTAQKGQ) is disordered. Residues 39–48 (DSATESTAQK) show a composition bias toward polar residues. The chain crosses the membrane as a helical span at residues 65-85 (VPVILILLMLISGGATGWLYL).

This sequence to M.tuberculosis Rv1363c.

The protein localises to the membrane. This is an uncharacterized protein from Mycobacterium tuberculosis (strain CDC 1551 / Oshkosh).